The primary structure comprises 200 residues: Ephrin-A2 (200 aa).

The signal sequence occupies residues Met1–Asp22. The Ephrin RBD domain occupies Ser28–Asn161. N-linked (GlcNAc...) asparagine glycosylation is present at Asn36. Disulfide bonds link Cys61–Cys101 and Cys89–Cys150. 2 N-linked (GlcNAc...) asparagine glycosylation sites follow: Asn161 and Asn175. The GPI-anchor amidated asparagine moiety is linked to residue Asn175. A propeptide spans Asn176–Ser200 (removed in mature form).

The protein belongs to the ephrin family. Binds to the receptor tyrosine kinases EPHA3, EPHA4 and EPHA5. Interacts with EPHA8; activates EPHA8. As to expression, expressed in a gradient across the tectum being more strongly expressed at the posterior pole.

The protein resides in the cell membrane. In terms of biological role, cell surface GPI-bound ligand for Eph receptors, a family of receptor tyrosine kinases which are crucial for migration, repulsion and adhesion during neuronal, vascular and epithelial development. Binds promiscuously Eph receptors residing on adjacent cells, leading to contact-dependent bidirectional signaling into neighboring cells. The signaling pathway downstream of the receptor is referred to as forward signaling while the signaling pathway downstream of the ephrin ligand is referred to as reverse signaling. With the EPHA2 receptor may play a role in bone remodeling through regulation of osteoclastogenesis and osteoblastogenesis. The sequence is that of Ephrin-A2 (EFNA2) from Gallus gallus (Chicken).